A 149-amino-acid chain; its full sequence is MKLILREDVENLGKGGDLVDVKPGYGRNYLLPRGLAVSANPKNVKELEHQKAVAAAKAAKLKASAQAVAKRLSETPVTLKRKVGEQDKLYGSVTALDVAEALAARGVQLDRRSIVLDEPIKTLGEFEVPVKLHSEVAGKVKVTVEAEAE.

This sequence belongs to the bacterial ribosomal protein bL9 family.

Binds to the 23S rRNA. This Anaeromyxobacter dehalogenans (strain 2CP-C) protein is Large ribosomal subunit protein bL9.